The following is a 374-amino-acid chain: Growth/differentiation factor 8 (374 aa).

The signal sequence occupies residues 1–22 (MHFTQVLISLSVLIACGPVGYG). The propeptide occupies 23–265 (DITAHQQPST…ISEGPKRIRR (243 aa)). N-linked (GlcNAc...) asparagine glycosylation is found at asparagine 72 and asparagine 274. 4 disulfide bridges follow: cysteine 271–cysteine 281, cysteine 280–cysteine 339, cysteine 308–cysteine 371, and cysteine 312–cysteine 373.

This sequence belongs to the TGF-beta family. Homodimer; disulfide-linked. Predominantly expressed in muscle. At hatching, expression is strongest in the skin epithelium, and is also found in the retina and brain. From day 28, expressed in skeletal muscle. In the adult, highest expression is seen in the gastrointestinal tract, brain, muscle, heart and testis. Also expressed in the adult pharynx, kidney, spleen, liver, gill, eyes, skin, swim bladder and ovary.

Its subcellular location is the secreted. In terms of biological role, acts specifically as a negative regulator of skeletal muscle growth. May down-regulate muscle-specific transcription factors such as myod and myog. This Danio rerio (Zebrafish) protein is Growth/differentiation factor 8 (mstnb).